Consider the following 503-residue polypeptide: Cytochrome P450 3A29 (503 aa).

Cys-442 serves as a coordination point for heme.

The protein belongs to the cytochrome P450 family. Requires heme as cofactor.

It is found in the endoplasmic reticulum membrane. It localises to the microsome membrane. The catalysed reaction is an organic molecule + reduced [NADPH--hemoprotein reductase] + O2 = an alcohol + oxidized [NADPH--hemoprotein reductase] + H2O + H(+). In terms of biological role, cytochromes P450 are a group of heme-thiolate monooxygenases. In liver microsomes, this enzyme is involved in an NADPH-dependent electron transport pathway. It oxidizes a variety of structurally unrelated compounds, including steroids, fatty acids, and xenobiotics. The sequence is that of Cytochrome P450 3A29 (CYP3A29) from Sus scrofa (Pig).